Here is a 331-residue protein sequence, read N- to C-terminus: Tagatose 1,6-diphosphate aldolase 2 (331 aa).

The protein belongs to the aldolase LacD family.

The catalysed reaction is D-tagatofuranose 1,6-bisphosphate = D-glyceraldehyde 3-phosphate + dihydroxyacetone phosphate. The protein operates within carbohydrate metabolism; D-tagatose 6-phosphate degradation; D-glyceraldehyde 3-phosphate and glycerone phosphate from D-tagatose 6-phosphate: step 2/2. This Enterococcus faecalis (strain ATCC 700802 / V583) protein is Tagatose 1,6-diphosphate aldolase 2 (lacD2).